Consider the following 241-residue polypeptide: DNA repair protein RecO (241 aa).

It belongs to the RecO family.

Functionally, involved in DNA repair and RecF pathway recombination. This Vibrio cholerae serotype O1 (strain ATCC 39541 / Classical Ogawa 395 / O395) protein is DNA repair protein RecO.